A 126-amino-acid chain; its full sequence is Large ribosomal subunit protein bL12 (126 aa).

This sequence belongs to the bacterial ribosomal protein bL12 family. In terms of assembly, homodimer. Part of the ribosomal stalk of the 50S ribosomal subunit. Forms a multimeric L10(L12)X complex, where L10 forms an elongated spine to which 2 to 4 L12 dimers bind in a sequential fashion. Binds GTP-bound translation factors.

In terms of biological role, forms part of the ribosomal stalk which helps the ribosome interact with GTP-bound translation factors. Is thus essential for accurate translation. The polypeptide is Large ribosomal subunit protein bL12 (Paracidovorax citrulli (strain AAC00-1) (Acidovorax citrulli)).